A 257-amino-acid chain; its full sequence is Pyridoxine 5'-phosphate synthase (257 aa).

N6 serves as a coordination point for 3-amino-2-oxopropyl phosphate. 8–9 (DH) contributes to the 1-deoxy-D-xylulose 5-phosphate binding site. R17 serves as a coordination point for 3-amino-2-oxopropyl phosphate. H41 (proton acceptor) is an active-site residue. Positions 43 and 48 each coordinate 1-deoxy-D-xylulose 5-phosphate. Residue E68 is the Proton acceptor of the active site. T98 serves as a coordination point for 1-deoxy-D-xylulose 5-phosphate. The Proton donor role is filled by H210. Residues G211 and 232–233 (GQ) contribute to the 3-amino-2-oxopropyl phosphate site.

The protein belongs to the PNP synthase family. In terms of assembly, homooctamer; tetramer of dimers.

The protein resides in the cytoplasm. It carries out the reaction 3-amino-2-oxopropyl phosphate + 1-deoxy-D-xylulose 5-phosphate = pyridoxine 5'-phosphate + phosphate + 2 H2O + H(+). Its pathway is cofactor biosynthesis; pyridoxine 5'-phosphate biosynthesis; pyridoxine 5'-phosphate from D-erythrose 4-phosphate: step 5/5. In terms of biological role, catalyzes the complicated ring closure reaction between the two acyclic compounds 1-deoxy-D-xylulose-5-phosphate (DXP) and 3-amino-2-oxopropyl phosphate (1-amino-acetone-3-phosphate or AAP) to form pyridoxine 5'-phosphate (PNP) and inorganic phosphate. In Campylobacter jejuni subsp. doylei (strain ATCC BAA-1458 / RM4099 / 269.97), this protein is Pyridoxine 5'-phosphate synthase.